Here is a 646-residue protein sequence, read N- to C-terminus: GHASQVLVRKRRANSMLEETKKGNLERECIEELCNKEEAREVFENDPETDYFYPKYLGCLGSFRAKLFTATRRSANGYPDLRSCVNAIPDQCNPLPCSEEGYLNCKDGQATFTCICKPGWQGEKCEIDINECKDPTNINGGCSQICDNTAGSYHCSCKSGFVMLANEKDCKDMDECSVKPSVCGTAVCKNTPGDFECECSEGYRYNPTAKSCEDIDECSENMCAQLCVNYPGGYSCYCDGKKGFKLAQDKKSCEAVPVCLPLDLDKNYQLLYLAEQFVGAVLYLKFHLPEITRFSAEFDFRTYDSEGVILYAESLDHSTWFLIALRQGKIEIQFKNDYAAQITTGGQVINDGLWNMVSVEELEHSVSIKIAQEPVMNINKPGSLFKPTNGFLETKVYFAGLPRKVENALIRPINPRLDGCMRGWNLMKQGASGVKEIIQQKQKKHCLVTVEKGSYYPGSGIAQFHIDYNNLSYVEDWQVNVTLNIRPSTGTGVMLTLVSGNTLPFALSLVQSTSETSQDILVSVENRVIYQLESISLCSGQQSQLEFSVSRNHLELSTPLVKDVIYSEDLQRHLAVLDEAMKGTVTTYLGGLPEVPFNATPVNAFYNGCMEVNINGVQLDLDEAISKHNDIRAHSCPSVWNDKTNS.

Positions glycine 1–arginine 12 are excised as a propeptide. One can recognise a Gla domain in the interval alanine 13–glycine 58. 4-carboxyglutamate is present on residues glutamate 18, glutamate 19, glutamate 26, glutamate 28, glutamate 31, glutamate 32, glutamate 37, glutamate 38, glutamate 41, glutamate 44, and glutamate 48. Cysteine 29 and cysteine 34 are joined by a disulfide. The tract at residues cysteine 59–alanine 87 is thrombin-sensitive. Positions isoleucine 88–glutamate 126 constitute an EGF-like 1 domain. Disulfide bonds link cysteine 92/cysteine 105, cysteine 97/cysteine 114, cysteine 116/cysteine 125, cysteine 132/cysteine 146, cysteine 142/cysteine 155, cysteine 157/cysteine 170, cysteine 176/cysteine 188, cysteine 183/cysteine 197, cysteine 199/cysteine 212, cysteine 218/cysteine 227, cysteine 223/cysteine 236, cysteine 238/cysteine 253, and cysteine 420/cysteine 446. (3R)-3-hydroxyaspartate is present on aspartate 107. The EGF-like 2; calcium-binding domain occupies aspartate 128–lysine 171. Positions aspartate 172–glutamate 213 constitute an EGF-like 3; calcium-binding domain. The region spanning aspartate 214–glutamate 254 is the EGF-like 4; calcium-binding domain. Laminin G-like domains lie at leucine 270–cysteine 446 and tyrosine 455–cysteine 636. N-linked (GlcNAc...) asparagine glycans are attached at residues asparagine 470 and asparagine 480. Residues cysteine 609 and cysteine 636 are joined by a disulfide bond.

In terms of assembly, interacts with C4b-binding protein, a regulator of the complex system. In rabbit plasma however, protein S appears to be present only in free form. In terms of processing, the iron and 2-oxoglutarate dependent 3-hydroxylation of aspartate and asparagine is (R) stereospecific within EGF domains. Plasma.

Its subcellular location is the secreted. In terms of biological role, anticoagulant plasma protein; it is a cofactor to activated protein C in the degradation of coagulation factors Va and VIIIa. It helps to prevent coagulation and stimulating fibrinolysis. This is Vitamin K-dependent protein S (PROS1) from Oryctolagus cuniculus (Rabbit).